Reading from the N-terminus, the 940-residue chain is Isoleucine--tRNA ligase (940 aa).

The 'HIGH' region signature appears at 58-68 (PYANGNIHIGH). Glutamate 563 is an L-isoleucyl-5'-AMP binding site. The short motif at 604–608 (KMSKS) is the 'KMSKS' region element. An ATP-binding site is contributed by lysine 607. Residues cysteine 903, cysteine 906, cysteine 923, and cysteine 926 each contribute to the Zn(2+) site.

This sequence belongs to the class-I aminoacyl-tRNA synthetase family. IleS type 1 subfamily. As to quaternary structure, monomer. Requires Zn(2+) as cofactor.

The protein resides in the cytoplasm. It carries out the reaction tRNA(Ile) + L-isoleucine + ATP = L-isoleucyl-tRNA(Ile) + AMP + diphosphate. Functionally, catalyzes the attachment of isoleucine to tRNA(Ile). As IleRS can inadvertently accommodate and process structurally similar amino acids such as valine, to avoid such errors it has two additional distinct tRNA(Ile)-dependent editing activities. One activity is designated as 'pretransfer' editing and involves the hydrolysis of activated Val-AMP. The other activity is designated 'posttransfer' editing and involves deacylation of mischarged Val-tRNA(Ile). This is Isoleucine--tRNA ligase from Buchnera aphidicola subsp. Acyrthosiphon pisum (strain APS) (Acyrthosiphon pisum symbiotic bacterium).